The chain runs to 144 residues: Probable disulfide formation protein (144 aa).

A helical transmembrane segment spans residues 10–29 (WNLLLLTWLVALISTLSALF). Cysteine 39 and cysteine 42 form a disulfide bridge. 2 helical membrane passes run 44–63 (FQRAFMFPLTVILAIACYRS) and 70–87 (YALPLTVIGAALAFVHTL). Cysteine 100 and cysteine 107 are disulfide-bonded. The chain crosses the membrane as a helical span at residues 116–138 (GVVPLPALALFAFIIIAILLIII).

The protein belongs to the DsbB family. BdbC subfamily.

The protein localises to the cell inner membrane. Required for disulfide bond formation in some proteins. This is Probable disulfide formation protein from Metapseudomonas resinovorans (Pseudomonas resinovorans).